A 314-amino-acid chain; its full sequence is Elongator complex protein 5 (314 aa).

The protein belongs to the ELP5 family. In terms of assembly, component of the elongator complex.

The protein localises to the cytoplasm. It is found in the nucleus. It participates in tRNA modification; 5-methoxycarbonylmethyl-2-thiouridine-tRNA biosynthesis. In terms of biological role, component of the elongator complex, a multiprotein complex which is required for multiple tRNA modifications, including mcm5U (5-methoxycarbonylmethyl uridine), mcm5s2U (5-methoxycarbonylmethyl-2-thiouridine), and ncm5U (5-carbamoylmethyl uridine). The elongator complex catalyzes formation of carboxymethyluridine in the wobble base at position 34 in tRNAs. This chain is Elongator complex protein 5 (iki1), found in Schizosaccharomyces pombe (strain 972 / ATCC 24843) (Fission yeast).